Consider the following 397-residue polypeptide: Succinate--CoA ligase [ADP-forming] subunit beta (397 aa).

The region spanning 9–254 (KALLKSFGAP…TTEEDEKEIE (246 aa)) is the ATP-grasp domain. ATP contacts are provided by residues lysine 46, 53–55 (GRG), glutamate 109, alanine 112, and glutamate 117. Asparagine 209 and aspartate 223 together coordinate Mg(2+). Substrate contacts are provided by residues asparagine 274 and 331-333 (GIM).

This sequence belongs to the succinate/malate CoA ligase beta subunit family. Heterotetramer of two alpha and two beta subunits. The cofactor is Mg(2+).

The catalysed reaction is succinate + ATP + CoA = succinyl-CoA + ADP + phosphate. It carries out the reaction GTP + succinate + CoA = succinyl-CoA + GDP + phosphate. Its pathway is carbohydrate metabolism; tricarboxylic acid cycle; succinate from succinyl-CoA (ligase route): step 1/1. Its function is as follows. Succinyl-CoA synthetase functions in the citric acid cycle (TCA), coupling the hydrolysis of succinyl-CoA to the synthesis of either ATP or GTP and thus represents the only step of substrate-level phosphorylation in the TCA. The beta subunit provides nucleotide specificity of the enzyme and binds the substrate succinate, while the binding sites for coenzyme A and phosphate are found in the alpha subunit. This chain is Succinate--CoA ligase [ADP-forming] subunit beta, found in Mesorhizobium japonicum (strain LMG 29417 / CECT 9101 / MAFF 303099) (Mesorhizobium loti (strain MAFF 303099)).